We begin with the raw amino-acid sequence, 79 residues long: Small integral membrane protein 40 (79 aa).

The helical transmembrane segment at 35-55 (FFIFLALFLTLLMLEAAYKLL) threads the bilayer.

Its subcellular location is the membrane. In Homo sapiens (Human), this protein is Small integral membrane protein 40.